The sequence spans 195 residues: Large ribosomal subunit protein uL18 (195 aa).

This sequence belongs to the universal ribosomal protein uL18 family. As to quaternary structure, part of the 50S ribosomal subunit. Contacts the 5S and 23S rRNAs.

This is one of the proteins that bind and probably mediate the attachment of the 5S RNA into the large ribosomal subunit, where it forms part of the central protuberance. The chain is Large ribosomal subunit protein uL18 from Methanococcus vannielii.